We begin with the raw amino-acid sequence, 357 residues long: Cytosolic Fe-S cluster assembly factor NAR1 (357 aa).

[4Fe-4S] cluster-binding residues include cysteine 14, cysteine 28, cysteine 31, cysteine 34, cysteine 129, cysteine 172, cysteine 297, and cysteine 301.

This sequence belongs to the NARF family.

Component of the cytosolic Fe/S protein assembly machinery. May play a role in the transfer of pre-assembled Fe/S clusters to target apoproteins. The chain is Cytosolic Fe-S cluster assembly factor NAR1 (NAR1) from Encephalitozoon cuniculi (strain GB-M1) (Microsporidian parasite).